Consider the following 351-residue polypeptide: DNA polymerase IV (351 aa).

In terms of domain architecture, UmuC spans 4 to 185 (IIHVDMDCFF…LPLAKIPGVG (182 aa)). Residues Asp8 and Asp103 each contribute to the Mg(2+) site. The active site involves Glu104.

The protein belongs to the DNA polymerase type-Y family. As to quaternary structure, monomer. It depends on Mg(2+) as a cofactor.

The protein localises to the cytoplasm. It catalyses the reaction DNA(n) + a 2'-deoxyribonucleoside 5'-triphosphate = DNA(n+1) + diphosphate. Functionally, poorly processive, error-prone DNA polymerase involved in untargeted mutagenesis. Copies undamaged DNA at stalled replication forks, which arise in vivo from mismatched or misaligned primer ends. These misaligned primers can be extended by PolIV. Exhibits no 3'-5' exonuclease (proofreading) activity. May be involved in translesional synthesis, in conjunction with the beta clamp from PolIII. This Escherichia coli O139:H28 (strain E24377A / ETEC) protein is DNA polymerase IV.